The primary structure comprises 410 residues: E3 ubiquitin-protein ligase ICP0 (410 aa).

The RING-type zinc finger occupies 46 to 85; that stretch reads CPICLDVAATEAQTLPCMHKFCLDCIQRWTLTSTACPLCN. The interval 243-410 is disordered; the sequence is TSESEAHSDS…IFIDLTQDDD (168 aa). Positions 287-315 are enriched in basic residues; that stretch reads APRRSPRRARRAAVLRREQRRTRCLRRGR. Composition is skewed to low complexity over residues 329-340 and 348-399; these read SSGEGSSAQHGA and GSAN…PRSA.

Post-translationally, auto-ubiquitinated.

The enzyme catalyses S-ubiquitinyl-[E2 ubiquitin-conjugating enzyme]-L-cysteine + [acceptor protein]-L-lysine = [E2 ubiquitin-conjugating enzyme]-L-cysteine + N(6)-ubiquitinyl-[acceptor protein]-L-lysine.. In terms of biological role, evades nuclear antiviral defenses triggered by dsDNA viruses. Acts during the initial stages of lytic infection and the reactivation of latent viral genome. Prevents the antiviral effect of nuclear bodies by degrading host PML and SP100. The sequence is that of E3 ubiquitin-protein ligase ICP0 (EP0) from Sus scrofa (Pig).